The chain runs to 838 residues: Transient receptor potential cation channel subfamily V member 1 (838 aa).

Disordered stretches follow at residues 1 to 63 (MEQR…PLDC) and 86 to 109 (RPGD…EKPP). Over 1 to 432 (MEQRASLDSE…QDKWDRFVKR (432 aa)) the chain is Cytoplasmic. The ANK 1 repeat unit spans residues 110-138 (RLYDRRSIFDAVAQSNCQELESLLPFLQR). Arg-115 is an ATP binding site. Ser-116 carries the phosphoserine; by PKA and PKD modification. Residue Thr-144 is modified to Phosphothreonine; by PKA; in vitro. The stretch at 153 to 185 (TGKTCLLKAMLNLHNGQNDTIALLLDVARKTDS) is one ANK 2 repeat. ATP contacts are provided by residues Lys-155, Lys-160, Asn-164, 199-202 (YKGQ), and 210-211 (ER). ANK repeat units lie at residues 203-228 (TALH…ADVQ), 249-276 (ELPL…QPAD), 285-321 (NTVL…KLHP), and 335-358 (TPLA…REIH). Thr-370 is subject to Phosphothreonine; by PKA; in vitro. The ANK 7 repeat unit spans residues 393–415 (NSVLEVIAYSSSETPNRHDMLLV). The chain crosses the membrane as a helical span at residues 433–453 (IFYFNFFVYCLYMIIFTAAAY). Over 454–471 (YRPVEGLPPYKLKNTVGD) the chain is Extracellular. Residues 472-497 (YFRVTGEILSVSGGVYFFFRGIQYFL) traverse the membrane as a helical segment. Over 498 to 510 (QRRPSLKSLFVDS) the chain is Cytoplasmic. Phosphoserine; by PKC/PRKCE is present on Ser-502. A resiniferatoxin-binding site is contributed by 511–512 (YS). A helical membrane pass occupies residues 511–531 (YSEILFFVQSLFMLVSVVLYF). Over 532–535 (SQRK) the chain is Extracellular. A helical transmembrane segment spans residues 536 to 556 (EYVASMVFSLAMGWTNMLYYT). Thr-550 and Arg-557 together coordinate resiniferatoxin. Topologically, residues 557–571 (RGFQQMGIYAVMIEK) are cytoplasmic. A helical transmembrane segment spans residues 572–599 (MILRDLCRFMFVYLVFLFGFSTAVVTLI). Residues 600-626 (EDGKNNSLPMESTPHKCRGSACKPGNS) are Extracellular-facing. Asn-604 carries N-linked (GlcNAc...) asparagine glycosylation. An intramembrane region (pore-forming) is located at residues 627–649 (YNSLYSTCLELFKFTIGMGDLEF). Residue Gly-643 coordinates Na(+). Positions 643-646 (GMGD) match the Selectivity filter motif. Asp-646 serves as a coordination point for Ca(2+). Over 650 to 657 (TENYDFKA) the chain is Extracellular. The chain crosses the membrane as a helical span at residues 658 to 686 (VFIILLLAYVILTYILLLNMLIALMGETV). Positions 684–712 (ETVNKIAQESKNIWKLQRAITILDTEKSF) are AD. At 687 to 838 (NKIAQESKNI…FKDSMVPGEK (152 aa)) the chain is on the cytoplasmic side. Thr-704 carries the phosphothreonine modification. Residues 767-801 (EGVKRTLSFSLRSGRVSGRNWKNFALVPLLRDAST) are interaction with calmodulin. Ser-774 carries the phosphoserine; by PKA; in vitro modification. A required for PIP2-mediated channel inhibition region spans residues 777-792 (LRSGRVSGRNWKNFAL). Ser-800 carries the phosphoserine; by PKC/PRKCE and PKC/PRKCZ modification. The residue at position 820 (Ser-820) is a Phosphoserine; by PKA; in vitro.

Belongs to the transient receptor (TC 1.A.4) family. TrpV subfamily. TRPV1 sub-subfamily. As to quaternary structure, homotetramer. Interacts with PIRT. May also form a heteromeric channel with TRPV3. Interacts with CALM, PRKCM and CSK. Interacts with PRKCG and NTRK1, probably by forming a trimeric complex. Interacts with the Scolopendra mutilans RhTx toxin. Interacts with the spider Tau-theraphotoxin-Hs1a. Interacts with TMEM100. Interacts with PACS2. Phosphorylation by PKA reverses capsaicin-induced dephosphorylation at multiple sites, probably including Ser-116 as a major phosphorylation site. Phosphorylation by CAMKII seems to regulate binding to vanilloids. Phosphorylated and modulated by PRKCE, PRKCM and probably PRKCZ. Dephosphorylation by calcineurin seems to lead to receptor desensitization and phosphorylation by CAMKII recovers activity. Predominantly expressed in trigeminal and dorsal root sensory ganglia. Expressed also in hippocampus, cortex, cerebellum, olfactory bulb, mesencephalon and hindbrain. High expression in the cell bodies and dendrites of neurons in the hippocampus and in the cortex. In the brain detected also in astrocytes and pericytes (at protein level). Isoform 1 and isoform 3 are expressed in brain and peripheral blood mononuclear cells.

Its subcellular location is the postsynaptic cell membrane. It localises to the cell projection. The protein resides in the dendritic spine membrane. It is found in the cell membrane. It catalyses the reaction Ca(2+)(in) = Ca(2+)(out). The catalysed reaction is Mg(2+)(in) = Mg(2+)(out). The enzyme catalyses Na(+)(in) = Na(+)(out). It carries out the reaction K(+)(in) = K(+)(out). With respect to regulation, channel activity is activated via the interaction with PIRT and phosphatidylinositol 4,5-bisphosphate (PIP2). Both PIRT and PIP2 are required to activate channel activity. The channel is sensitized by ATP binding. Repeated stimulation with capsaicin gives rise to progressively smaller responses, due to desensitization. This desensitization is triggered by the influx of calcium ions and is inhibited by elevated ATP levels. Ca(2+) and CALM displace ATP from its binding site and trigger a conformation change that leads to a closed, desensitized channel. Intracellular PIP2 inhibits desensitization. The double-knot toxin (DkTx) from the Chinese earth tiger tarantula activates the channel and traps it in an open conformation. The Scolopendra mutilans RhTx toxin potentiates the heat activation pathway mediated by this channel by binding to the charge-rich outer pore region (in an activated state). Its function is as follows. Non-selective calcium permeant cation channel involved in detection of noxious chemical and thermal stimuli. Seems to mediate proton influx and may be involved in intracellular acidosis in nociceptive neurons. Involved in mediation of inflammatory pain and hyperalgesia. Sensitized by a phosphatidylinositol second messenger system activated by receptor tyrosine kinases, which involves PKC isozymes and PCL. Activation by vanilloids, like capsaicin, and temperatures higher than 42 degrees Celsius. Upon activation, exhibits a time- and Ca(2+)-dependent outward rectification, followed by a long-lasting refractory state. Mild extracellular acidic pH (6.5) potentiates channel activation by noxious heat and vanilloids, whereas acidic conditions (pH &lt;6) directly activate the channel. Can be activated by endogenous compounds, including 12-hydroperoxytetraenoic acid and bradykinin. Acts as ionotropic endocannabinoid receptor with central neuromodulatory effects. Triggers a form of long-term depression (TRPV1-LTD) mediated by the endocannabinoid anandamine in the hippocampus and nucleus accumbens by affecting AMPA receptors endocytosis. Does not display channel activity in response to noxious chemical compounds, such as capsaicin and the vanilloid resiniferatoxin. Channel activity is not elicited by mildly acidic extracellular pH, and only slight channel activity is observed in response to noxiuos heat stimuli. This chain is Transient receptor potential cation channel subfamily V member 1 (Trpv1), found in Rattus norvegicus (Rat).